The sequence spans 615 residues: Chaperone protein HtpG (615 aa).

An a; substrate-binding region spans residues 1-335 (MSAEKQTHGF…APDLPLNVSR (335 aa)). The segment at 336-541 (ELLQDYGPVQ…EDQLGPQMRR (206 aa)) is b. A c region spans residues 542–615 (MLEAAGQPVP…RMQALLSQSV (74 aa)).

This sequence belongs to the heat shock protein 90 family. Homodimer.

It is found in the cytoplasm. In terms of biological role, molecular chaperone. Has ATPase activity. In Alcanivorax borkumensis (strain ATCC 700651 / DSM 11573 / NCIMB 13689 / SK2), this protein is Chaperone protein HtpG.